Reading from the N-terminus, the 839-residue chain is Genome polyprotein (839 aa).

Residues 55–66 (TAEVGSHQSEPL) show a composition bias toward polar residues. Residues 55-76 (TAEVGSHQSEPLKTSVDKPGSK) form a disordered region. Short sequence motifs ((L)YPX(n)L motif) lie at residues 167–171 (YPHGL) and 200–205 (YPVWEL). Over residues 496 to 510 (SGGFSTTVSTEQNVP) the composition is skewed to polar residues. Disordered regions lie at residues 496–530 (SGGFSTTVSTEQNVPDPQVGITTPKDLKGKANKGK) and 773–792 (GDLESSVDDPRTDEDRRFES). The segment at 766–836 (MLDRIAGGDL…RKLKGLFSQS (71 aa)) is involved in P1-2A pentamerization. The span at 780–792 (DDPRTDEDRRFES) shows a compositional bias: basic and acidic residues.

Belongs to the picornaviridae polyprotein family. In terms of assembly, homodimer. Homomultimer; probably interacts with membranes in a multimeric form. Seems to assemble into amyloid-like fibers. Homopentamer. Homooligomer. As to quaternary structure, interacts with capsid protein VP2. Interacts with capsid protein VP3. In terms of assembly, interacts with capsid protein VP1. Interacts with capsid protein VP3. Interacts with capsid protein VP1. Interacts with capsid protein VP2. Specific enzymatic cleavages by viral protease in vivo yield a variety of precursors and mature proteins. Polyprotein processing intermediates are produced, such as P1-2A which is a functional precursor of the structural proteins, VP0 which is a VP4-VP2 precursor, VP1-2A precursor, 3ABC precursor which is a stable and catalytically active precursor of 3A, 3B and 3C proteins, 3AB and 3CD precursors. The assembly signal 2A is removed from VP1-2A by a host protease, possibly host Cathepsin L. This cleavage occurs over a region of 3 amino-acids probably generating VP1 proteins with heterogeneous C-termini. In terms of processing, during virion maturation, immature virions are rendered infectious following cleavage of VP0 into VP4 and VP2. This maturation seems to be an autocatalytic event triggered by the presence of RNA in the capsid and is followed by a conformational change of the particle. Post-translationally, the assembly signal 2A is removed from VP1-2A by a host protease, possibly host Cathepsin L in naked virions. This cleavage does not occur in enveloped virions. This cleavage occurs over a region of 3 amino-acids probably generating VP1 proteins with heterogeneous C-termini. Unlike other picornaviruses, does not seem to be myristoylated.

It localises to the virion. It is found in the host endosome. Its subcellular location is the host multivesicular body. The protein resides in the host membrane. Capsid proteins VP1, VP2, and VP3 form a closed capsid enclosing the viral positive strand RNA genome. All these proteins contain a beta-sheet structure called beta-barrel jelly roll. Together they form an icosahedral capsid (T=3) composed of 60 copies of each VP1, VP2, and VP3, with a diameter of approximately 300 Angstroms. VP1 is situated at the 12 fivefold axes, whereas VP2 and VP3 are located at the quasi-sixfold axes. The naked capsid interacts with the host receptor HAVCR1 to provide virion attachment to and probably entry into the target cell. Its function is as follows. VP0 precursor is a component of the immature procapsids. Functionally, plays a role in the assembly of the 12 pentamers into an icosahedral structure. Has not been detected in mature virions, supposedly owing to its small size. In terms of biological role, precursor component of immature procapsids that corresponds to an extended form of the structural protein VP1. After maturation, possibly by the host Cathepsin L, the assembly signal 2A is cleaved to give rise to the mature VP1 protein. Affects membrane integrity and causes an increase in membrane permeability. Its function is as follows. Functions as a viroporin. Affects membrane integrity and causes an increase in membrane permeability. Involved in host intracellular membrane rearrangements probably to give rise to the viral factories. Does not disrupt calcium homeostasis or glycoprotein trafficking. Antagonizes the innate immune response of the host by suppressing IFN-beta synthesis, which it achieves by interfering with the RIG-I/IFIH1 pathway. This is Genome polyprotein from Callithrix (Owl-faced monkey).